A 639-amino-acid polypeptide reads, in one-letter code: Signal recognition particle receptor subunit alpha (639 aa).

The segment at 132 to 317 (APTTMKKFED…STKPSATKGT (186 aa)) is disordered. 2 stretches are compositionally biased toward basic and acidic residues: residues 137 to 146 (KKFEDSEKAK) and 153 to 165 (IETRGEKPKEKAK). Ser178 carries the phosphoserine modification. Positions 204-240 (ELSKEEQIRRKREEFIQKHGRGMEKSSKSSKSDAPKE) are enriched in basic and acidic residues. Phosphothreonine is present on Thr285. Phosphoserine is present on residues Ser297, Ser298, and Ser299. Polar residues predominate over residues 305–315 (AQNSTKPSATK). Residues 420–637 (YVVTFCGVNG…NAKAVVAALM (218 aa)) are NG domain. Residue 426–433 (GVNGVGKS) coordinates GTP. Residue Ser474 is modified to Phosphoserine. 521–525 (DTAGR) is a GTP binding site. Thr579 bears the Phosphothreonine mark. Residue 589 to 592 (TKFD) participates in GTP binding.

It belongs to the GTP-binding SRP family. Heterodimer with SRPRB. Interacts with the signal recognition particle (SRP) complex subunit SRP54.

The protein localises to the endoplasmic reticulum membrane. In terms of biological role, component of the SRP (signal recognition particle) receptor. Ensures, in conjunction with the signal recognition particle, the correct targeting of the nascent secretory proteins to the endoplasmic reticulum membrane system. Forms a guanosine 5'-triphosphate (GTP)-dependent complex with the SRP subunit SRP54. SRP receptor compaction and GTPase rearrangement drive SRP-mediated cotranslational protein translocation into the ER. The sequence is that of Signal recognition particle receptor subunit alpha from Bos taurus (Bovine).